Reading from the N-terminus, the 243-residue chain is Probable septum site-determining protein MinC (243 aa).

The protein belongs to the MinC family. As to quaternary structure, interacts with MinD and FtsZ.

Cell division inhibitor that blocks the formation of polar Z ring septums. Rapidly oscillates between the poles of the cell to destabilize FtsZ filaments that have formed before they mature into polar Z rings. Prevents FtsZ polymerization. The chain is Probable septum site-determining protein MinC from Agathobacter rectalis (strain ATCC 33656 / DSM 3377 / JCM 17463 / KCTC 5835 / VPI 0990) (Eubacterium rectale).